The chain runs to 1167 residues: RNA-directed RNA polymerase (1167 aa).

One can recognise a RdRp catalytic domain in the interval 553 to 735; it reads LTYGILAEAT…KALASYTGLE (183 aa).

This sequence belongs to the reoviridae RNA-directed RNA polymerase family. Interacts with VP3 (Potential). Interacts with VP2 (Potential). Interacts with NSP5; this interaction is probably necessary for the formation of functional virus factories.

Its subcellular location is the virion. The enzyme catalyses RNA(n) + a ribonucleoside 5'-triphosphate = RNA(n+1) + diphosphate. In terms of biological role, RNA-directed RNA polymerase that is involved in both transcription and genome replication. Together with VP3 capping enzyme, forms an enzyme complex positioned near the channels situated at each of the five-fold vertices of the core. Following infection, the outermost layer of the virus is lost, leaving a double-layered particle (DLP) made up of the core and VP6 shell. VP1 then catalyzes the transcription of fully conservative plus-strand genomic RNAs that are extruded through the DLP's channels into the cytoplasm where they function as mRNAs for translation of viral proteins. One copy of each of the viral (+)RNAs is also recruited during core assembly, together with newly synthesized polymerase complexes and VP2. The polymerase of these novo-formed particles catalyzes the synthesis of complementary minus-strands leading to dsDNA formation. To do so, the polymerase specifically recognizes conserved 3' sequence(s) in plus-strand RNA templates. Once dsRNA synthesis is complete, the polymerase switches to the transcriptional mode, thus providing secondary transcription. The chain is RNA-directed RNA polymerase from Rotavirus X (isolate RVX/Human/Bangladesh/NADRV-B219/2002/GXP[X]) (RV ADRV-N).